We begin with the raw amino-acid sequence, 444 residues long: Transposase for insertion sequence element IS1557 (444 aa).

Residues 273–292 (PKWGRGRPGKNAAPRPGRER) form a disordered region.

The protein belongs to the transposase 12 family.

The protein is Transposase for insertion sequence element IS1557 of Mycobacterium tuberculosis (strain CDC 1551 / Oshkosh).